We begin with the raw amino-acid sequence, 2345 residues long: Acetyl-CoA carboxylase 1 (2345 aa).

The residue at position 1 (Met1) is an N-acetylmethionine. Phosphoserine is present on residues Ser5, Ser23, Ser25, Ser29, Ser34, Ser47, Ser49, and Ser52. Thr57 carries the phosphothreonine modification. Ser77 bears the Phosphoserine mark. Ser79 is modified (phosphoserine; by AMPK). The region spanning 116–617 (VIEKVLIANN…DTGWLDRLIA (502 aa)) is the Biotin carboxylation domain. The ATP-grasp domain maps to 274-465 (SKRILNVPQD…LPAAQLQIAM (192 aa)). Residue 314–319 (GGGGKG) participates in ATP binding. Residues Glu423, Glu436, and Asn438 each coordinate Mg(2+). Mn(2+) contacts are provided by Glu423, Glu436, and Asn438. Residue Arg440 is part of the active site. Residue Thr609 is modified to Phosphothreonine. Positions 744–818 (FEKENDPSVM…DPGCVIAKMQ (75 aa)) constitute a Biotinyl-binding domain. An N6-biotinyllysine modification is found at Lys785. Ser834 carries the post-translational modification Phosphoserine. Phosphoserine; by AMPK; in vitro occurs at positions 1200 and 1215. Ser1217 bears the Phosphoserine mark. Residue Thr1226 is modified to Phosphothreonine. 3 positions are modified to phosphoserine: Ser1258, Ser1262, and Ser1272. Lys1333 is modified (N6-acetyllysine). The CoA carboxyltransferase N-terminal domain occupies 1575-1913 (PYVTKDLLQS…NVHSSVPLLN (339 aa)). Residues 1575 to 2233 (PYVTKDLLQS…EDLVKKKIHS (659 aa)) form a carboxyltransferase region. 3 residues coordinate CoA: Arg1822, Lys2126, and Arg2128. The CoA carboxyltransferase C-terminal domain occupies 1917 to 2233 (PIDRIIEFVP…EDLVKKKIHS (317 aa)). Thr2152 carries the post-translational modification Phosphothreonine.

Monomer, homodimer, and homotetramer. Can form filamentous polymers. Interacts in its inactive phosphorylated form with the BRCT domains of BRCA1 which prevents ACACA dephosphorylation and inhibits lipid synthesis. Interacts with MID1IP1; interaction with MID1IP1 promotes oligomerization and increases its activity. Mg(2+) is required as a cofactor. It depends on Mn(2+) as a cofactor. Requires biotin as cofactor. Post-translationally, the N-terminus is blocked. Phosphorylation on Ser-1262 is required for interaction with BRCA1. In terms of processing, phosphorylation at Ser-79 by AMPK inactivates enzyme activity. Phosphorylated in vitro at Ser-1200 and Ser-1215 by AMPK; the relevance of phosphorylation of these sites in vivo is however unclear. Post-translationally, the biotin cofactor is covalently attached to the central biotinyl-binding domain and is required for the catalytic activity.

Its subcellular location is the cytoplasm. It is found in the cytosol. It catalyses the reaction hydrogencarbonate + acetyl-CoA + ATP = malonyl-CoA + ADP + phosphate + H(+). The protein operates within lipid metabolism; malonyl-CoA biosynthesis; malonyl-CoA from acetyl-CoA: step 1/1. Its activity is regulated as follows. Inhibited by phosphorylation. Citrate promotes oligomerization of the protein into filaments that correspond to the most active form of the carboxylase. Its function is as follows. Cytosolic enzyme that catalyzes the carboxylation of acetyl-CoA to malonyl-CoA, the first and rate-limiting step of de novo fatty acid biosynthesis. This is a 2 steps reaction starting with the ATP-dependent carboxylation of the biotin carried by the biotin carboxyl carrier (BCC) domain followed by the transfer of the carboxyl group from carboxylated biotin to acetyl-CoA. The polypeptide is Acetyl-CoA carboxylase 1 (Rattus norvegicus (Rat)).